The primary structure comprises 295 residues: Inward rectifier potassium channel Kirbac3.1 (295 aa).

Residues 1–47 (MTGGMKPPARKPRILNSDGSSNITRLGLEKRGWLDDHYHDLLTVSWP) are Cytoplasmic-facing. Residues 48–69 (VFITLITGLYLVTNALFALAYL) traverse the membrane as a helical segment. Topologically, residues 70-82 (ACGDVIENARPGS) are extracellular. Residues 83 to 95 (FTDAFFFSVQTMA) constitute an intramembrane region (helical; Pore-forming). The short motif at 96–100 (TIGYG) is the Selectivity filter element. A helical membrane pass occupies residues 107-131 (PLANTLVTLEALCGMLGLAVAASLI). Residues 132 to 295 (YARFTRPTAG…DLGKFHEIAQ (164 aa)) lie on the Cytoplasmic side of the membrane.

It belongs to the inward rectifier-type potassium channel (TC 1.A.2.1) family. KCNJ11 subfamily. As to quaternary structure, homotetramer.

The protein localises to the membrane. Inward rectifier potassium channel that mediates potassium uptake into the cell. Inward rectifier potassium channels are characterized by a greater tendency to allow potassium to flow into the cell rather than out of it. The inward rectification may be achieved by the blockage of outward current by cytoplasmic divalent metal ions and polyamines. Complements an E.coli mutant that is defective in K(+) uptake. This chain is Inward rectifier potassium channel Kirbac3.1, found in Paramagnetospirillum magnetotacticum (Aquaspirillum magnetotacticum).